A 584-amino-acid chain; its full sequence is Interferon regulatory factor 2-binding protein 1 (584 aa).

Residues 60–127 (VLPEGRSPGP…SGRLPLPSPA (68 aa)) are disordered. Phosphoserine occurs at positions 66 and 125. An Omega-N-methylarginine modification is found at Arg-177. Residue Ser-186 is modified to Phosphoserine. The stretch at 197 to 217 (EKEKQQRNADCLAELNEAMRG) forms a coiled coil. Lys-227 participates in a covalent cross-link: Glycyl lysine isopeptide (Lys-Gly) (interchain with G-Cter in SUMO2). The disordered stretch occupies residues 346–420 (PAEALPQQYP…PYSAETPGVP (75 aa)). The segment covering 354–369 (YPEPAPAALCGPPPRA) has biased composition (pro residues). Phosphoserine occurs at positions 371, 384, 421, and 436. The segment at 433 to 495 (LGHSPKDPGG…VSGGGSGTGA (63 aa)) is disordered. Residue Lys-438 forms a Glycyl lysine isopeptide (Lys-Gly) (interchain with G-Cter in SUMO2) linkage. The segment covering 449–463 (AGGASPAASSTAQPP) has biased composition (low complexity). Ser-453 and Ser-457 each carry phosphoserine. The RING-type; degenerate zinc-finger motif lies at 503–550 (CTLCRERLEDTHFVQCPSVPGHKFCFPCSREFIKAQGPAGEVYCPSGD). A cys-rich region spans residues 503 to 550 (CTLCRERLEDTHFVQCPSVPGHKFCFPCSREFIKAQGPAGEVYCPSGD).

This sequence belongs to the IRF2BP family. In terms of assembly, interacts with IRF2. Part of a corepressor complex containing IRF2 and IRF2BP2. Interacts with JDP2.

It localises to the nucleus. The catalysed reaction is S-ubiquitinyl-[E2 ubiquitin-conjugating enzyme]-L-cysteine + [acceptor protein]-L-lysine = [E2 ubiquitin-conjugating enzyme]-L-cysteine + N(6)-ubiquitinyl-[acceptor protein]-L-lysine.. Its function is as follows. Acts as a transcriptional corepressor in a IRF2-dependent manner; this repression is not mediated by histone deacetylase activities. May act as an E3 ligase towards JDP2, enhancing its polyubiquitination. Represses ATF2-dependent transcriptional activation. This Homo sapiens (Human) protein is Interferon regulatory factor 2-binding protein 1 (IRF2BP1).